A 130-amino-acid polypeptide reads, in one-letter code: Spore coat protein M (130 aa).

Involved in spore outer coat assembly. May be part of a cross-linked insoluble skeleton that surrounds the spore, serves as a matrix for the assembly of additional outer coat material, and confers structural stability to the final structure. This Bacillus subtilis (strain 168) protein is Spore coat protein M (cotM).